Here is a 318-residue protein sequence, read N- to C-terminus: MSGAESYRHITVLLNEAVDALAVREDGVYVDGTFGRGGHSRLILSRLGDAGRLIVFDKDPQAIAVAEELARSDKRVGVVHGGFASFQTALDGLGIGKVDGALFDLGISSPQIDDGSRGFSFRFDAPLDMRMDTTRGMSAAEWIAVASEQDLHEVIKNYGEERFSRQIVRAIVAQRAESPIDTTRKLAQIVAQNVRTRERGQDPATRTFQAIRIFINRELEEVGAVLPQVMCRLKEGGRLAVIAFHSLEDRIVKQFVKKYSQHEPLPSWAAVREADLPEPPLKIVGRALKPGEAEIAANPRARSAVLRVAERTAGPIPE.

Residues glycine 37 to histidine 39, aspartate 57, phenylalanine 83, aspartate 104, and glutamine 111 each bind S-adenosyl-L-methionine.

The protein belongs to the methyltransferase superfamily. RsmH family.

The protein resides in the cytoplasm. It catalyses the reaction cytidine(1402) in 16S rRNA + S-adenosyl-L-methionine = N(4)-methylcytidine(1402) in 16S rRNA + S-adenosyl-L-homocysteine + H(+). Its function is as follows. Specifically methylates the N4 position of cytidine in position 1402 (C1402) of 16S rRNA. The sequence is that of Ribosomal RNA small subunit methyltransferase H from Neisseria gonorrhoeae (strain NCCP11945).